We begin with the raw amino-acid sequence, 956 residues long: Calsyntenin-3 (956 aa).

Positions 1–19 (MTLLLLPLLLASLLASCSC) are cleaved as a signal peptide. Topologically, residues 20–847 (NKANKHKPWI…SHRNSMIPSA (828 aa)) are extracellular. Cadherin domains follow at residues 29-145 (IEAE…APVF) and 146-246 (VERL…KPSW). N-linked (GlcNAc...) asparagine glycans are attached at residues asparagine 299, asparagine 327, asparagine 347, asparagine 507, and asparagine 740. A helical membrane pass occupies residues 848–868 (ATLIIVVCVGFLVLMVVLGLV). The Cytoplasmic portion of the chain corresponds to 869–956 (RIHSLHRRVS…RIIETPPHRY (88 aa)). Positions 917 to 956 (ACVTGAVGGQQEDEDSSDSEVADSPSSDERRIIETPPHRY) are disordered. Residues 927 to 937 (QEDEDSSDSEV) show a composition bias toward acidic residues. A compositionally biased stretch (basic and acidic residues) spans 943–956 (SDERRIIETPPHRY).

It belongs to the calsyntenin family. Interacts (via cadherin domains) with both alpha and beta isoforms of neurexins (NRXN1, NRXN2 and NRXN3). Directly interacts with APBA2. Forms a tripartite complex with APBA2 and APP. Interacts with low affinity with KLC1. Interacts with SLC23A2/SVCT2. Proteolytically processed under normal cellular conditions. A primary zeta-cleavage generates a large extracellular (soluble) N-terminal domain (sAlc) and a short C-terminal transmembrane fragment (CTF1). A secondary cleavage catalyzed by gamma-secretase within the transmembrane domain releases the beta-Alc-beta chain in the extracellular milieu and produces an intracellular fragment (AlcICD). This processing is strongly suppressed in the tripartite complex formed with APBA2 and APP, which seems to prevent the association with gamma-secretase.

The protein resides in the postsynaptic cell membrane. It is found in the endoplasmic reticulum membrane. The protein localises to the golgi apparatus membrane. It localises to the cell projection. Its subcellular location is the dendrite. Functionally, postsynaptic adhesion molecule that binds to presynaptic neurexins to mediate both excitatory and inhibitory synapse formation. Promotes synapse development by acting as a cell adhesion molecule at the postsynaptic membrane, which associates with both neurexin-alpha and neurexin-beta proteins at the presynaptic membrane. Regulates the balance between excitatory and inhibitory synapses by inhibiting formation of excitatory parallel-fiber synapses and promoting formation of inhibitory synapses in the same neuron. May also be involved in ascorbate (vitamin C) uptake via its interaction with SLC23A2/SVCT2. Complex formation with APBA2 and APP, stabilizes APP metabolism and enhances APBA2-mediated suppression of beta-APP40 secretion, due to the retardation of intracellular APP maturation. This Pongo abelii (Sumatran orangutan) protein is Calsyntenin-3 (CLSTN3).